We begin with the raw amino-acid sequence, 235 residues long: Large ribosomal subunit protein uL1 (235 aa).

Belongs to the universal ribosomal protein uL1 family. As to quaternary structure, part of the 50S ribosomal subunit.

Its function is as follows. Binds directly to 23S rRNA. The L1 stalk is quite mobile in the ribosome, and is involved in E site tRNA release. Functionally, protein L1 is also a translational repressor protein, it controls the translation of the L11 operon by binding to its mRNA. The sequence is that of Large ribosomal subunit protein uL1 from Pseudarthrobacter chlorophenolicus (strain ATCC 700700 / DSM 12829 / CIP 107037 / JCM 12360 / KCTC 9906 / NCIMB 13794 / A6) (Arthrobacter chlorophenolicus).